The chain runs to 450 residues: MNNKRHSTNEQLSLDEINNTIKFDHRSSNKQKFLSFLGPGLLVAGGYMDSGNWITSMQGGAQYGYTLLFGNLISRLSAMLLQSMTVRLGIATGMDLAQMTRHYLSRPIAIIFWIIAELAIIATDIAEVIGSAIALNLLFNIPLIVGALITVLDVFLLLFIMKYGFRKIEAIVGTLIFTVLFIFIFEVYISSPQLNAVLNGFIPHSEIITNNGILYIALGIIGATIMPHNLYLHSSIVQSRTYSRHNNEEKAQAIKFATIDSNIQLSIAFVVNCLLLVLGASLFFNSNADDLGGFYDLYHALKTEPVLGATMGAIMSTLFAVALLASGQNSTITGTLAGQIVMEGFLRLHIPNWLRRLITRSLAVIPVIVCLIIFKGNAAKIEQLLVFSQVFLSIALPFCLIPLQLATSNKDLMGPFYNKTWVNIISWTLIIILSILNVYLIVQTFQELQG.

11 helical membrane-spanning segments follow: residues 34-54 (LSFL…GNWI), 59-81 (GGAQ…AMLL), 108-128 (IAII…IAEV), 141-161 (IPLI…LFIM), 170-190 (AIVG…VYIS), 212-232 (GILY…NLYL), 263-283 (IQLS…ASLF), 305-325 (PVLG…ALLA), 361-381 (SLAV…AAKI), 383-403 (QLLV…LIPL), and 422-442 (VNII…YLIV).

It belongs to the NRAMP family.

It localises to the cell membrane. Functionally, h(+)-stimulated, divalent metal cation uptake system. The chain is Divalent metal cation transporter MntH from Staphylococcus aureus (strain MRSA252).